We begin with the raw amino-acid sequence, 694 residues long: Polyribonucleotide nucleotidyltransferase (694 aa).

Asp-485 and Asp-491 together coordinate Mg(2+). The region spanning 552-611 (PRIETMQIKPNKIATVIGPGGKQIRQIIEEAGVQIDINDSGLVSISASSPQAIEKAKSII) is the KH domain. Residues 621–689 (GKIYEGRVTS…EKGQYKLSHK (69 aa)) form the S1 motif domain.

Belongs to the polyribonucleotide nucleotidyltransferase family. It depends on Mg(2+) as a cofactor.

It localises to the cytoplasm. It carries out the reaction RNA(n+1) + phosphate = RNA(n) + a ribonucleoside 5'-diphosphate. In terms of biological role, involved in mRNA degradation. Catalyzes the phosphorolysis of single-stranded polyribonucleotides processively in the 3'- to 5'-direction. In Chlamydia abortus (strain DSM 27085 / S26/3) (Chlamydophila abortus), this protein is Polyribonucleotide nucleotidyltransferase.